Consider the following 487-residue polypeptide: ATP-dependent rRNA helicase RRP3 (487 aa).

The tract at residues 22 to 67 (IKRKALEKQQQAHANEPSPSDEDSAQSNSKDSNSNEQPEESEEIFE) is disordered. Residues 67 to 95 (ESFTELDLVPELIEACKNLNYNKPTPIQS) carry the Q motif motif. The region spanning 98 to 270 (IPPALKGSDI…RASLTNPVKC (173 aa)) is the Helicase ATP-binding domain. Position 111-118 (111-118 (AQTGSGKT)) interacts with ATP. The DEAD box signature appears at 217–220 (DEAD). Residues 298–442 (LIYLLNEFIG…ENVDKDAILA (145 aa)) enclose the Helicase C-terminal domain. Residues 459 to 487 (NRRNKEKQARGKGRRGRMATRDNMDREER) form a disordered region. Basic and acidic residues predominate over residues 477–487 (ATRDNMDREER).

It belongs to the DEAD box helicase family. DDX47/RRP3 subfamily. Interacts with the SSU processome.

The protein resides in the nucleus. It carries out the reaction ATP + H2O = ADP + phosphate + H(+). ATP-dependent rRNA helicase required for pre-ribosomal RNA processing. Involved in the maturation of the 35S-pre-rRNA and to its cleavage to mature 18S rRNA. This is ATP-dependent rRNA helicase RRP3 from Kluyveromyces lactis (strain ATCC 8585 / CBS 2359 / DSM 70799 / NBRC 1267 / NRRL Y-1140 / WM37) (Yeast).